The chain runs to 348 residues: MASGEDGPRSCMVCGDRATGYHFHALTCEGCKGFFRRTVSKNTGLTCPFAGNCKVNKAQRRHCPACRLQKCLDAGMKKEMILSAEALVQRRAKQAQRRAQWAPVQLSKGQQELVQTLLGAHARHVGTMFDQFVQFRPPAHLFIHHQRLPIPVPALPLLKHFAEVNTFMVQEVIKFTKDLPLFRSLPMEDQISLLKGAAVEICHIALNTTFCLQTRNFLCGPLCYALEDGVHVGFQEEFLELLFRFHATLRRLQLQEPEYVLMAAMALFSPDRPGVTRREEIDRLQEVTALTLQSYIKGQPPRPRDRFLYAKLLGLLAELRSIDNAYGYQIQHIQGLSAMMPLLQEICS.

Positions 8-83 form a DNA-binding region, nuclear receptor; that stretch reads PRSCMVCGDR…AGMKKEMILS (76 aa). Residues 11-31 form an NR C4-type zinc finger; the sequence is CMVCGDRATGYHFHALTCEGC. Thr38 carries the phosphothreonine; by PKC modification. An NR C4-type zinc finger spans residues 47-71; it reads CPFAGNCKVNKAQRRHCPACRLQKC. The NR LBD domain maps to 109-348; the sequence is GQQELVQTLL…MMPLLQEICS (240 aa).

This sequence belongs to the nuclear hormone receptor family. NR1 subfamily. As to quaternary structure, heterodimer of NR1I3 and RXR. Interacts with PSMC4. Interacts with ECT2. Directly interacts with DNAJC7; this complex may also include HSP90. Interacts with CRY1. Interacts with CRY2 in a ligand-dependent manner. Phosphorylated at Thr-38 by PKC, dephosphorylation of Thr-38 is required for nuclear translocation and activation.

Its subcellular location is the nucleus. The protein localises to the cytoplasm. It is found in the cytoskeleton. Binds and transactivates the retinoic acid response elements that control expression of the retinoic acid receptor beta 2 and alcohol dehydrogenase 3 genes. Transactivates both the phenobarbital responsive element module of the human CYP2B6 gene and the CYP3A4 xenobiotic response element. This chain is Nuclear receptor subfamily 1 group I member 3 (NR1I3), found in Callorhinus ursinus (Northern fur seal).